The sequence spans 508 residues: Phosphoenolpyruvate carboxylase (508 aa).

Belongs to the PEPCase type 2 family. Homotetramer. Requires Mg(2+) as cofactor.

It catalyses the reaction oxaloacetate + phosphate = phosphoenolpyruvate + hydrogencarbonate. Catalyzes the irreversible beta-carboxylation of phosphoenolpyruvate (PEP) to form oxaloacetate (OAA), a four-carbon dicarboxylic acid source for the tricarboxylic acid cycle. This Picrophilus torridus (strain ATCC 700027 / DSM 9790 / JCM 10055 / NBRC 100828 / KAW 2/3) protein is Phosphoenolpyruvate carboxylase.